The following is a 723-amino-acid chain: Multiple organellar RNA editing factor 4, mitochondrial (723 aa).

Residues 1–64 (MAMFSHRLRR…RLFSTTQYQY (64 aa)) constitute a mitochondrion transit peptide. Disordered regions lie at residues 180 to 303 (ITPG…GQTQ), 318 to 474 (RQEM…EGQP), and 663 to 723 (QNGG…NSRI). The span at 191 to 204 (EGFDSLKKESKPEQ) shows a compositional bias: basic and acidic residues. 4 stretches are compositionally biased toward polar residues: residues 219–233 (TSGQVQGQGSLTLPD), 273–303 (GQWQSRGQGNSFQGSFKQSQGTLPVRKGQTQ), 327–365 (GQAQRSQMPSSQGTLRQGQAQGSQRPSNQVGYNQGQGAQ), and 373–430 (QGAQ…NYSP). Low complexity-rich tracts occupy residues 459 to 474 (QGQGTPLPGQGQEGQP) and 682 to 695 (QGFSGQGQNQTFQQ). Residues 714–723 (TETRKPNSRI) show a composition bias toward basic and acidic residues.

The protein belongs to the MORF family. As to quaternary structure, heterodimers with MORF8/RIP1, MORF1/RIP8 and MORF3/RIP3.

The protein resides in the mitochondrion. Functionally, involved in organellar RNA editing. Required for the processing of few RNA editing site in mitochondria. This Arabidopsis thaliana (Mouse-ear cress) protein is Multiple organellar RNA editing factor 4, mitochondrial.